The sequence spans 235 residues: Adenosine 5'-phosphosulfate reductase (235 aa).

The [4Fe-4S] cluster site is built by Cys-121, Cys-122, Cys-204, and Cys-207. Cys-230 serves as the catalytic Nucleophile; cysteine thiosulfonate intermediate.

This sequence belongs to the PAPS reductase family. CysH subfamily. It depends on [4Fe-4S] cluster as a cofactor.

It is found in the cytoplasm. The enzyme catalyses [thioredoxin]-disulfide + sulfite + AMP + 2 H(+) = adenosine 5'-phosphosulfate + [thioredoxin]-dithiol. The protein operates within sulfur metabolism; hydrogen sulfide biosynthesis; sulfite from sulfate. Functionally, catalyzes the formation of sulfite from adenosine 5'-phosphosulfate (APS) using thioredoxin as an electron donor. This is Adenosine 5'-phosphosulfate reductase from Geobacillus kaustophilus (strain HTA426).